A 254-amino-acid polypeptide reads, in one-letter code: Probable phosphatase Sbal_1472 (254 aa).

Positions 8, 10, 16, 41, 74, 102, 132, 193, and 195 each coordinate Zn(2+).

This sequence belongs to the PHP family. Requires Zn(2+) as cofactor.

This is Probable phosphatase Sbal_1472 from Shewanella baltica (strain OS155 / ATCC BAA-1091).